A 246-amino-acid polypeptide reads, in one-letter code: Pyridoxine 5'-phosphate synthase (246 aa).

Position 12 (N12) interacts with 3-amino-2-oxopropyl phosphate. 14 to 15 (DH) lines the 1-deoxy-D-xylulose 5-phosphate pocket. R23 provides a ligand contact to 3-amino-2-oxopropyl phosphate. The Proton acceptor role is filled by H48. Positions 50 and 55 each coordinate 1-deoxy-D-xylulose 5-phosphate. The active-site Proton acceptor is the E75. 1-deoxy-D-xylulose 5-phosphate is bound at residue T105. H196 functions as the Proton donor in the catalytic mechanism. 3-amino-2-oxopropyl phosphate is bound by residues G197 and 218 to 219 (GH).

It belongs to the PNP synthase family. As to quaternary structure, homooctamer; tetramer of dimers.

Its subcellular location is the cytoplasm. The enzyme catalyses 3-amino-2-oxopropyl phosphate + 1-deoxy-D-xylulose 5-phosphate = pyridoxine 5'-phosphate + phosphate + 2 H2O + H(+). It functions in the pathway cofactor biosynthesis; pyridoxine 5'-phosphate biosynthesis; pyridoxine 5'-phosphate from D-erythrose 4-phosphate: step 5/5. Its function is as follows. Catalyzes the complicated ring closure reaction between the two acyclic compounds 1-deoxy-D-xylulose-5-phosphate (DXP) and 3-amino-2-oxopropyl phosphate (1-amino-acetone-3-phosphate or AAP) to form pyridoxine 5'-phosphate (PNP) and inorganic phosphate. The sequence is that of Pyridoxine 5'-phosphate synthase from Thiobacillus denitrificans (strain ATCC 25259 / T1).